A 366-amino-acid polypeptide reads, in one-letter code: Autophagy-related protein 18b (366 aa).

WD repeat units lie at residues S6–E44, A178–S218, and T223–S265.

Belongs to the WD repeat PROPPIN family. Component of the PI(3,5)P2 regulatory complex at least composed of ATG18, SAC/FIG4, FAB1 and VAC14. As to expression, expressed in roots, stems, flowers and leaves.

It is found in the preautophagosomal structure membrane. Its subcellular location is the vacuole membrane. Its function is as follows. The PI(3,5)P2 regulatory complex regulates both the synthesis and turnover of phosphatidylinositol 3,5-bisphosphate (PtdIns(3,5)P2). Required for autophagy. The polypeptide is Autophagy-related protein 18b (ATG18B) (Arabidopsis thaliana (Mouse-ear cress)).